Consider the following 613-residue polypeptide: Glutamyl-tRNA(Gln) amidotransferase subunit E (613 aa).

The protein belongs to the GatB/GatE family. GatE subfamily. Heterodimer of GatD and GatE.

The enzyme catalyses L-glutamyl-tRNA(Gln) + L-glutamine + ATP + H2O = L-glutaminyl-tRNA(Gln) + L-glutamate + ADP + phosphate + H(+). Allows the formation of correctly charged Gln-tRNA(Gln) through the transamidation of misacylated Glu-tRNA(Gln) in organisms which lack glutaminyl-tRNA synthetase. The reaction takes place in the presence of glutamine and ATP through an activated gamma-phospho-Glu-tRNA(Gln). The GatDE system is specific for glutamate and does not act on aspartate. In Archaeoglobus fulgidus (strain ATCC 49558 / DSM 4304 / JCM 9628 / NBRC 100126 / VC-16), this protein is Glutamyl-tRNA(Gln) amidotransferase subunit E.